The sequence spans 156 residues: MPRRRVVAKREILPDPKFGSQILAKFMNHVMVSGKKSVSERIVYGALDIITERKGLDSLETFEKALDNIRPAVEVKSRRVGGATYQVPVEVRPSRRTALAMRWLVDAARKRGEKSMPARLAGEVMDAAEGKGAAMKKREDVHRMAEANKAFSHFRF.

It belongs to the universal ribosomal protein uS7 family. As to quaternary structure, part of the 30S ribosomal subunit. Contacts proteins S9 and S11.

In terms of biological role, one of the primary rRNA binding proteins, it binds directly to 16S rRNA where it nucleates assembly of the head domain of the 30S subunit. Is located at the subunit interface close to the decoding center, probably blocks exit of the E-site tRNA. In Alcanivorax borkumensis (strain ATCC 700651 / DSM 11573 / NCIMB 13689 / SK2), this protein is Small ribosomal subunit protein uS7.